Consider the following 300-residue polypeptide: Ribosomal protein L11 methyltransferase (300 aa).

4 residues coordinate S-adenosyl-L-methionine: Thr152, Gly173, Asp195, and Asn234.

Belongs to the methyltransferase superfamily. PrmA family.

It localises to the cytoplasm. It catalyses the reaction L-lysyl-[protein] + 3 S-adenosyl-L-methionine = N(6),N(6),N(6)-trimethyl-L-lysyl-[protein] + 3 S-adenosyl-L-homocysteine + 3 H(+). Methylates ribosomal protein L11. This Paraburkholderia xenovorans (strain LB400) protein is Ribosomal protein L11 methyltransferase.